Reading from the N-terminus, the 289-residue chain is Bifunctional protein FolD (289 aa).

NADP(+) is bound by residues 165 to 167 (GAS) and Ser-190.

Belongs to the tetrahydrofolate dehydrogenase/cyclohydrolase family. As to quaternary structure, homodimer.

It carries out the reaction (6R)-5,10-methylene-5,6,7,8-tetrahydrofolate + NADP(+) = (6R)-5,10-methenyltetrahydrofolate + NADPH. It catalyses the reaction (6R)-5,10-methenyltetrahydrofolate + H2O = (6R)-10-formyltetrahydrofolate + H(+). Its pathway is one-carbon metabolism; tetrahydrofolate interconversion. In terms of biological role, catalyzes the oxidation of 5,10-methylenetetrahydrofolate to 5,10-methenyltetrahydrofolate and then the hydrolysis of 5,10-methenyltetrahydrofolate to 10-formyltetrahydrofolate. This Ralstonia nicotianae (strain ATCC BAA-1114 / GMI1000) (Ralstonia solanacearum) protein is Bifunctional protein FolD.